We begin with the raw amino-acid sequence, 635 residues long: 3-dehydroshikimate dehydratase (635 aa).

4 residues coordinate a divalent metal cation: Glu134, Asp165, Gln191, and Glu239. VOC domains lie at 295–414 and 440–590; these read GVEF…LVEQ and RIDH…VYTE. 3 residues coordinate Mg(2+): His443, His521, and Glu599.

Belongs to the bacterial two-domain DSD family. As to quaternary structure, homodimer. Requires Co(2+) as cofactor. Ni(2+) is required as a cofactor. Mg(2+) serves as cofactor. It depends on Mn(2+) as a cofactor.

It catalyses the reaction 3-dehydroshikimate = 3,4-dihydroxybenzoate + H2O. The protein operates within aromatic compound metabolism; 3,4-dihydroxybenzoate biosynthesis. Its function is as follows. Catalyzes the conversion of 3-dehydroshikimate to protocatechuate (3,4-dihydroxybenzoate), a common intermediate of quinate and shikimate degradation pathways. This chain is 3-dehydroshikimate dehydratase, found in Pseudomonas putida (strain ATCC 47054 / DSM 6125 / CFBP 8728 / NCIMB 11950 / KT2440).